The sequence spans 241 residues: Peroxisomal membrane protein 11C (241 aa).

Residues 1-122 (MALLNRLASA…ADAKVLRVDS (122 aa)) lie on the Cytoplasmic side of the membrane. Residues 123-149 (AWWWTLNTALWTLSLLLGAVKALWTML) traverse the membrane as a helical segment. Topologically, residues 150–211 (KLRQKLRSPT…GVLWAGRFPP (62 aa)) are lumenal. Residues 212-227 (WLVGLMGTISSILSTC) form a helical membrane-spanning segment. Residues 228–241 (QAVRAGRQAEADSP) are Cytoplasmic-facing.

It belongs to the peroxin-11 family. Homodimer. Heterodimer with either PEX11A or PEX11B. Interacts with FIS1. In terms of tissue distribution, expressed in liver and at much lower levels in heart, kidney and testis.

Its subcellular location is the peroxisome membrane. In terms of biological role, promotes membrane protrusion and elongation on the peroxisomal surface. In Mus musculus (Mouse), this protein is Peroxisomal membrane protein 11C (Pex11g).